Reading from the N-terminus, the 449-residue chain is MFREKFRKFHFIGIGGIGMSGIAKILLDMGYEVSGSDVRQNDVIKELKEKGATIYIGHDAKNVIGKEVVVYSSAISNVNEELLKAKELGLQVISRGDMLADLFRMKEGIAISGSHGKTTTTSMISHISHIAGLDPTVLIGGILQTFGSNAVLGKSELLISEADESDGSFLKLNSVINVVTNIDKEHIGYYKDYEDIKEAFVKFINNVPFYGASVVNIDDTGVRSILSKIHKKIITYGIESGDFQAKNIVFNSDNTRFDVFYKGIKLNTIELQIPGIHNVYNALASIAVSTLMEIEQPVIRDALKSFKNAKRRIEFVGEKNTNLIYDDYGHHPTEIKSVYEALKSKYKDKNIVVVFQPHRYSRTYYLIDDFVDLFKSLDKVFLLDIYGASEENTFGISSLDMINKVSKEECVYIPSKEELFDRLDELKDSVIVFMGAGSIGQWSHEYAKT.

An ATP-binding site is contributed by 113–119 (GSHGKTT).

The protein belongs to the MurCDEF family.

It is found in the cytoplasm. The catalysed reaction is UDP-N-acetyl-alpha-D-muramate + L-alanine + ATP = UDP-N-acetyl-alpha-D-muramoyl-L-alanine + ADP + phosphate + H(+). It participates in cell wall biogenesis; peptidoglycan biosynthesis. Cell wall formation. In Hydrogenobaculum sp. (strain Y04AAS1), this protein is UDP-N-acetylmuramate--L-alanine ligase.